The chain runs to 701 residues: Centrosomal protein of 83 kDa (701 aa).

The segment covering 1-14 has biased composition (polar residues); that stretch reads MVVSTFTDMDTFPN. Positions 1–23 are disordered; the sequence is MVVSTFTDMDTFPNNFPPGGDSG. 2 coiled-coil regions span residues 40-634 and 665-698; these read LRCE…SLIL and HMQE…ELGS. Phosphoserine is present on S698.

This sequence belongs to the CEP83 family. As to quaternary structure, interacts with CEP164 and IFT20.

It is found in the cytoplasm. It localises to the cytoskeleton. The protein localises to the microtubule organizing center. The protein resides in the centrosome. Its subcellular location is the centriole. In terms of biological role, component of the distal appendage region of the centriole involved in the initiation of primary cilium assembly. May collaborate with IFT20 in the trafficking of ciliary membrane proteins from the Golgi complex to the cilium during the initiation of primary cilium assembly. This chain is Centrosomal protein of 83 kDa (CEP83), found in Homo sapiens (Human).